We begin with the raw amino-acid sequence, 254 residues long: MASLLKVDQEVKLKVDSFRERITSEAEDLVANFFPKKLLELDSFLKEPILNIHDLTQIHSDMNLPVPDPILLTNSHDGLDGPTYKKRRLDECEEAFQGTKVFVMPNGMLKSNQQLVDIIEKVKPEIRLLIEKCNTVKMWVQLLIPRIEDGNNFGVSIQEETVAELRTVESEAASYLDQISRYYITRAKLVSKIAKYPHVEDYRRTVTEIDEKEYISLRLIISELRNQYVTLHDMILKNIEKIKRPRSSNAETLY.

Residue A2 is modified to N-acetylalanine. Phosphoserine occurs at positions 17 and 24. K195 carries the N6-acetyllysine; by P300/CBP modification. S247 carries the phosphoserine; by CHEK2 modification.

Belongs to the PA28 family. As to quaternary structure, homoheptamer; the stability of the heptamer is essential for the specific activation of the trypsine-like subunit and inhibition of the chymotrypsin-like and postglutamyl-preferring (PGPH) subunits of the proteasome. Interacts with p53/TP53 and MDM2. Interacts with MAP3K3. Associates with the proteasome. Interacts with CCAR2. Interacts with PSME3IP1 (via C-terminus); the interaction is direct and promotes the association of PSME3 with the 20S proteasome. Interacts with COIL; the interaction is inhibited by PSME3IP1. In terms of assembly, (Microbial infection) Interacts with human cytomegalovirus UL27. Phosphorylated by MAP3K3. Phosphorylation at Ser-247 promotes its association with CCAR2. Post-translationally, acetylation at the major site Lys-195 is important for oligomerization and ability to degrade its target substrates. Deacetylated by SIRT1.

It localises to the nucleus. It is found in the cytoplasm. Functionally, subunit of the 11S REG-gamma (also called PA28-gamma) proteasome regulator, a doughnut-shaped homoheptamer which associates with the proteasome. 11S REG-gamma activates the trypsin-like catalytic subunit of the proteasome but inhibits the chymotrypsin-like and postglutamyl-preferring (PGPH) subunits. Facilitates the MDM2-p53/TP53 interaction which promotes ubiquitination- and MDM2-dependent proteasomal degradation of p53/TP53, limiting its accumulation and resulting in inhibited apoptosis after DNA damage. May also be involved in cell cycle regulation. Mediates CCAR2 and CHEK2-dependent SIRT1 inhibition. This Homo sapiens (Human) protein is Proteasome activator complex subunit 3 (PSME3).